The chain runs to 986 residues: Regulator of telomere elongation helicase 1 homolog (986 aa).

The Helicase ATP-binding domain maps to 7–326; that stretch reads AGIPVHFPFE…KEMLLELEKA (320 aa). An ATP-binding site is contributed by 42 to 49; the sequence is SPTGTGKT. Residues Cys-148, Cys-166, Cys-175, and Cys-211 each contribute to the [4Fe-4S] cluster site. Positions 254–257 match the DEAH box motif; that stretch reads DEGH. Phosphothreonine is present on Thr-875.

Belongs to the helicase family. RAD3/XPD subfamily.

The protein localises to the nucleus. It catalyses the reaction ATP + H2O = ADP + phosphate + H(+). Functionally, a probable ATP-dependent DNA helicase implicated in DNA repair and the maintenance of genomic stability. Acts as an anti-recombinase to counteract toxic recombination and limit crossover during meiosis. Regulates meiotic recombination and crossover homeostasis by physically dissociating strand invasion events and thereby promotes noncrossover repair by meiotic synthesis dependent strand annealing (SDSA) as well as disassembly of D loop recombination intermediates. The protein is Regulator of telomere elongation helicase 1 homolog of Drosophila grimshawi (Hawaiian fruit fly).